Reading from the N-terminus, the 899-residue chain is Putative lipoxygenase 5 (899 aa).

Disordered stretches follow at residues 15–34 (AGSR…RSTA), 48–68 (APVE…SVAA), and 258–291 (VASA…SAES). The PLAT domain maps to 68-204 (ARAVVTVRRR…VSRDRRVFFS (137 aa)). The region spanning 207-899 (PYLPSETPPG…CRGVPNSVTI (693 aa)) is the Lipoxygenase domain. The Fe cation site is built by His559, His564, His751, Asn755, and Ile899.

It belongs to the lipoxygenase family. Requires Fe cation as cofactor.

It catalyses the reaction (9Z,12Z)-octadecadienoate + O2 = (13S)-hydroperoxy-(9Z,11E)-octadecadienoate. The enzyme catalyses (9Z,12Z,15Z)-octadecatrienoate + O2 = (13S)-hydroperoxy-(9Z,11E,15Z)-octadecatrienoate. It functions in the pathway lipid metabolism; oxylipin biosynthesis. Its function is as follows. Plant lipoxygenase may be involved in a number of diverse aspects of plant physiology including growth and development, pest resistance, and senescence or responses to wounding. Catalyzes the hydroperoxidation of lipids containing a cis,cis-1,4-pentadiene structure. This Oryza sativa subsp. japonica (Rice) protein is Putative lipoxygenase 5.